The sequence spans 887 residues: ABC transporter A family member 10 (887 aa).

7 helical membrane-spanning segments follow: residues 38-58 (GIQY…VITL), 198-218 (YLYV…LLVT), 245-265 (IIIV…VVLY), 277-297 (VMLF…GIIL), 309-329 (AISS…QFYL), 335-355 (SSWL…EFLY), and 376-396 (ISFL…WYIT). A compositionally biased stretch (low complexity) spans 443 to 469 (NNCNNNNTSPSSSSSSQSSPLNKPLLS). The disordered stretch occupies residues 443-474 (NNCNNNNTSPSSSSSSQSSPLNKPLLSGDSDD). Residues 481 to 728 (IRLVNLKKTY…FNLGYILTIV (248 aa)) enclose the ABC transporter domain. An ATP-binding site is contributed by 519-526 (GQNGSGKT). Over residues 774-797 (NNNNNENNSNNSDGSSSSSDSSSS) the composition is skewed to low complexity. Residues 774 to 799 (NNNNNENNSNNSDGSSSSSDSSSSKD) form a disordered region.

The protein belongs to the ABC transporter superfamily. ABCA family.

The protein resides in the membrane. The chain is ABC transporter A family member 10 (abcA10) from Dictyostelium discoideum (Social amoeba).